The primary structure comprises 638 residues: 1-deoxy-D-xylulose-5-phosphate synthase (638 aa).

Thiamine diphosphate-binding positions include H72 and 113–115; that span reads GHA. D144 is a Mg(2+) binding site. Thiamine diphosphate is bound by residues 145–146, N174, Y287, and E370; that span reads GA. A Mg(2+)-binding site is contributed by N174.

It belongs to the transketolase family. DXPS subfamily. In terms of assembly, homodimer. Requires Mg(2+) as cofactor. Thiamine diphosphate serves as cofactor.

The enzyme catalyses D-glyceraldehyde 3-phosphate + pyruvate + H(+) = 1-deoxy-D-xylulose 5-phosphate + CO2. The protein operates within metabolic intermediate biosynthesis; 1-deoxy-D-xylulose 5-phosphate biosynthesis; 1-deoxy-D-xylulose 5-phosphate from D-glyceraldehyde 3-phosphate and pyruvate: step 1/1. Functionally, catalyzes the acyloin condensation reaction between C atoms 2 and 3 of pyruvate and glyceraldehyde 3-phosphate to yield 1-deoxy-D-xylulose-5-phosphate (DXP). This chain is 1-deoxy-D-xylulose-5-phosphate synthase, found in Picosynechococcus sp. (strain ATCC 27264 / PCC 7002 / PR-6) (Agmenellum quadruplicatum).